A 353-amino-acid polypeptide reads, in one-letter code: Photosystem II protein D1 (353 aa).

An N-acetylthreonine modification is found at threonine 2. Position 2 is a phosphothreonine (threonine 2). Transmembrane regions (helical) follow at residues 29 to 46, 118 to 133, and 142 to 156; these read YIGWFGVLMIPTLLTATS, HFLLGVACYMGREWEL, and WIAVAYSAPVAAAAA. Residue histidine 118 participates in chlorophyll a binding. Position 126 (tyrosine 126) interacts with pheophytin a. [CaMn4O5] cluster contacts are provided by aspartate 170 and glutamate 189. The helical transmembrane segment at 197–218 threads the bilayer; it reads FHMLGVAGVFGGSLFSAMHGSL. Histidine 198 serves as a coordination point for chlorophyll a. A quinone-binding positions include histidine 215 and 264–265; that span reads SF. Histidine 215 is a Fe cation binding site. Histidine 272 contacts Fe cation. The chain crosses the membrane as a helical span at residues 274-288; that stretch reads FLAAWPVVGIWFTAL. Residues histidine 332, glutamate 333, aspartate 342, and alanine 344 each coordinate [CaMn4O5] cluster. Positions 345-353 are excised as a propeptide; that stretch reads AVEAPSTNG.

It belongs to the reaction center PufL/M/PsbA/D family. PSII is composed of 1 copy each of membrane proteins PsbA, PsbB, PsbC, PsbD, PsbE, PsbF, PsbH, PsbI, PsbJ, PsbK, PsbL, PsbM, PsbT, PsbX, PsbY, PsbZ, Psb30/Ycf12, at least 3 peripheral proteins of the oxygen-evolving complex and a large number of cofactors. It forms dimeric complexes. It depends on The D1/D2 heterodimer binds P680, chlorophylls that are the primary electron donor of PSII, and subsequent electron acceptors. It shares a non-heme iron and each subunit binds pheophytin, quinone, additional chlorophylls, carotenoids and lipids. D1 provides most of the ligands for the Mn4-Ca-O5 cluster of the oxygen-evolving complex (OEC). There is also a Cl(-1) ion associated with D1 and D2, which is required for oxygen evolution. The PSII complex binds additional chlorophylls, carotenoids and specific lipids. as a cofactor. Post-translationally, tyr-161 forms a radical intermediate that is referred to as redox-active TyrZ, YZ or Y-Z. C-terminally processed by CTPA; processing is essential to allow assembly of the oxygen-evolving complex and thus photosynthetic growth.

The protein localises to the plastid. The protein resides in the chloroplast thylakoid membrane. It carries out the reaction 2 a plastoquinone + 4 hnu + 2 H2O = 2 a plastoquinol + O2. Its function is as follows. Photosystem II (PSII) is a light-driven water:plastoquinone oxidoreductase that uses light energy to abstract electrons from H(2)O, generating O(2) and a proton gradient subsequently used for ATP formation. It consists of a core antenna complex that captures photons, and an electron transfer chain that converts photonic excitation into a charge separation. The D1/D2 (PsbA/PsbD) reaction center heterodimer binds P680, the primary electron donor of PSII as well as several subsequent electron acceptors. This Panax ginseng (Korean ginseng) protein is Photosystem II protein D1.